The primary structure comprises 193 residues: Putative deoxynucleotide monophosphate kinase (193 aa).

Lys10 is a dGMP binding site. The ATP site is built by Gly13 and Thr16. Leu36, Lys37, Lys58, Asp122, Arg124, Glu128, and Ser155 together coordinate dGMP.

Belongs to the dNMP kinase family.

The catalysed reaction is a 2'-deoxyribonucleoside 5'-phosphate + ATP = a 2'-deoxyribonucleoside 5'-diphosphate + ADP. The chain is Putative deoxynucleotide monophosphate kinase from Acanthamoeba polyphaga mimivirus (APMV).